The sequence spans 274 residues: Thiazole synthase (274 aa).

K111 (schiff-base intermediate with DXP) is an active-site residue. Residues G172, 198–199, and 220–221 contribute to the 1-deoxy-D-xylulose 5-phosphate site; these read AG and NT.

Belongs to the ThiG family. In terms of assembly, homotetramer. Forms heterodimers with either ThiH or ThiS.

It is found in the cytoplasm. The catalysed reaction is [ThiS sulfur-carrier protein]-C-terminal-Gly-aminoethanethioate + 2-iminoacetate + 1-deoxy-D-xylulose 5-phosphate = [ThiS sulfur-carrier protein]-C-terminal Gly-Gly + 2-[(2R,5Z)-2-carboxy-4-methylthiazol-5(2H)-ylidene]ethyl phosphate + 2 H2O + H(+). Its pathway is cofactor biosynthesis; thiamine diphosphate biosynthesis. In terms of biological role, catalyzes the rearrangement of 1-deoxy-D-xylulose 5-phosphate (DXP) to produce the thiazole phosphate moiety of thiamine. Sulfur is provided by the thiocarboxylate moiety of the carrier protein ThiS. In vitro, sulfur can be provided by H(2)S. The protein is Thiazole synthase of Gloeobacter violaceus (strain ATCC 29082 / PCC 7421).